The following is a 721-amino-acid chain: Translation initiation factor eIF2B subunit epsilon (721 aa).

The span at 1 to 13 shows a compositional bias: low complexity; the sequence is MAAPVVAPPGVVV. Residues 1-40 form a disordered region; sequence MAAPVVAPPGVVVSRANKRSGAGPGGSGGGGARGAEEEPP. Residue A2 is modified to N-acetylalanine. An Omega-N-methylarginine modification is found at R19. The span at 22–33 shows a compositional bias: gly residues; it reads AGPGGSGGGGAR. At S27 the chain carries Phosphoserine. Residues K61 and K103 each participate in a glycyl lysine isopeptide (Lys-Gly) (interchain with G-Cter in ubiquitin) cross-link. Phosphoserine is present on S130. Glycyl lysine isopeptide (Lys-Gly) (interchain with G-Cter in ubiquitin) cross-links involve residues K141 and K217. T322 carries the phosphothreonine modification. 2 disordered regions span residues 444 to 483 and 523 to 547; these read PEGS…MKGY and EESE…SPQM. Residues S450, S466, S469, S532, and S540 each carry the phosphoserine modification. Acidic residues-rich tracts occupy residues 456–471 and 523–537; these read AEED…DSGA and EESE…DSEE. Positions 543-720 constitute a W2 domain; the sequence is GSPQMDDIKV…KEAEEESSED (178 aa). The residue at position 544 (S544) is a Phosphoserine; by DYRK2. The residue at position 717 (S717) is a Phosphoserine.

The protein belongs to the eIF-2B gamma/epsilon subunits family. As to quaternary structure, component of the translation initiation factor 2B (eIF2B) complex which is a heterodecamer of two sets of five different subunits: alpha, beta, gamma, delta and epsilon. Subunits alpha, beta and delta comprise a regulatory subcomplex and subunits epsilon and gamma comprise a catalytic subcomplex. Within the complex, the hexameric regulatory complex resides at the center, with the two heterodimeric catalytic subcomplexes bound on opposite sides. Phosphorylated at Ser-544 by DYRK2; this is required for subsequent phosphorylation by GSK3B. Phosphorylated on serine and threonine residues by GSK3B; phosphorylation inhibits its function. Post-translationally, polyubiquitinated, probably by NEDD4.

The protein localises to the cytoplasm. Its subcellular location is the cytosol. With respect to regulation, activated by the chemical integrated stress response (ISR) inhibitor ISRIB which stimulates guanine nucleotide exchange factor activity for both phosphorylated and unphosphorylated eIF2. Its function is as follows. Acts as a component of the translation initiation factor 2B (eIF2B) complex, which catalyzes the exchange of GDP for GTP on eukaryotic initiation factor 2 (eIF2) gamma subunit. Its guanine nucleotide exchange factor activity is repressed when bound to eIF2 complex phosphorylated on the alpha subunit, thereby limiting the amount of methionyl-initiator methionine tRNA available to the ribosome and consequently global translation is repressed. This Homo sapiens (Human) protein is Translation initiation factor eIF2B subunit epsilon (EIF2B5).